The primary structure comprises 262 residues: Transmembrane protein 270 (262 aa).

5 helical membrane passes run Leu6–Ile26, Ala30–Leu50, Pro67–Leu87, Leu92–Gly112, and Leu127–Trp147. The interval Gln226 to Glu262 is disordered. A compositionally biased stretch (pro residues) spans Thr240 to Glu262.

The protein resides in the membrane. This chain is Transmembrane protein 270, found in Bos taurus (Bovine).